A 510-amino-acid chain; its full sequence is Histidine ammonia-lyase (510 aa).

A cross-link (5-imidazolinone (Ala-Gly)) is located at residues 143-145; sequence ASG. Position 144 is a 2,3-didehydroalanine (Ser) (S144).

This sequence belongs to the PAL/histidase family. Contains an active site 4-methylidene-imidazol-5-one (MIO), which is formed autocatalytically by cyclization and dehydration of residues Ala-Ser-Gly.

The protein resides in the cytoplasm. The enzyme catalyses L-histidine = trans-urocanate + NH4(+). The protein operates within amino-acid degradation; L-histidine degradation into L-glutamate; N-formimidoyl-L-glutamate from L-histidine: step 1/3. The sequence is that of Histidine ammonia-lyase from Yersinia pestis.